The sequence spans 477 residues: Argininosuccinate lyase (477 aa).

It belongs to the lyase 1 family. Argininosuccinate lyase subfamily.

It is found in the cytoplasm. It carries out the reaction 2-(N(omega)-L-arginino)succinate = fumarate + L-arginine. It functions in the pathway amino-acid biosynthesis; L-arginine biosynthesis; L-arginine from L-ornithine and carbamoyl phosphate: step 3/3. The polypeptide is Argininosuccinate lyase (Streptomyces avermitilis (strain ATCC 31267 / DSM 46492 / JCM 5070 / NBRC 14893 / NCIMB 12804 / NRRL 8165 / MA-4680)).